The following is a 326-amino-acid chain: Eukaryotic translation initiation factor 2 subunit 1 (326 aa).

In terms of domain architecture, S1 motif spans 24-95 (DDLIMVKVNR…QKGYIDLSKR (72 aa)). Position 59 is a phosphoserine; by eIK1, eIK2 and PK4 (S59). The interval 291–326 (LDKHDGLSSDDEYSSDGDEDDSSNDDDNSSDEDDDD) is disordered. Residues 298–326 (SSDDEYSSDGDEDDSSNDDDNSSDEDDDD) show a composition bias toward acidic residues.

It belongs to the eIF-2-alpha family. Phosphorylates at Ser-59 in mature trophozoites, schizonts and gametocytes but not in rings and young trophozoites. Phosphorylates at Ser-59 by eIK2 in salivary gland sporozoites but not in midgut and hemocoel sporozoites. Dephosphorylated at Ser-59 by UIS2. Phosphorylation of eIF2alpha subunit of the pre-initiation complex eIF2 inhibits recycling of inactive eIF2-GDP to active eIF2-GTP by limiting the activity of the guanine nucleotide exchange factor eIF2B and thus, inhibits protein translation.

The protein localises to the cytoplasm. It is found in the stress granule. Functions in the early steps of protein synthesis by forming a ternary complex with GTP and initiator tRNA. May regulate protein translation in response to amino acid starvation. May regulate protein at various stages of parasite development. The polypeptide is Eukaryotic translation initiation factor 2 subunit 1 (Plasmodium berghei (strain Anka)).